The sequence spans 149 residues: Lipoprotein signal peptidase (149 aa).

2 consecutive transmembrane segments (helical) span residues 53–73 (MPGK…ALVI) and 89–109 (GLIA…GFVI). Residues aspartate 110 and aspartate 124 contribute to the active site. A helical transmembrane segment spans residues 119 to 139 (VFNLADSAIVCGGILLLILVL).

The protein belongs to the peptidase A8 family.

It localises to the cell membrane. The enzyme catalyses Release of signal peptides from bacterial membrane prolipoproteins. Hydrolyzes -Xaa-Yaa-Zaa-|-(S,diacylglyceryl)Cys-, in which Xaa is hydrophobic (preferably Leu), and Yaa (Ala or Ser) and Zaa (Gly or Ala) have small, neutral side chains.. The protein operates within protein modification; lipoprotein biosynthesis (signal peptide cleavage). Functionally, this protein specifically catalyzes the removal of signal peptides from prolipoproteins. This chain is Lipoprotein signal peptidase, found in Syntrophomonas wolfei subsp. wolfei (strain DSM 2245B / Goettingen).